The following is a 184-amino-acid chain: Ribulose bisphosphate carboxylase small subunit, chloroplastic 5 (184 aa).

Residues 1-43 constitute a chloroplast transit peptide; it reads MAAAMMNKTIVVSKDGCARSSSIPKVATNKMGFASAVAMKKSR.

It belongs to the RuBisCO small chain family. As to quaternary structure, heterohexadecamer of 8 large and 8 small subunits.

The protein resides in the plastid. The protein localises to the chloroplast. In terms of biological role, ruBisCO catalyzes two reactions: the carboxylation of D-ribulose 1,5-bisphosphate, the primary event in carbon dioxide fixation, as well as the oxidative fragmentation of the pentose substrate. Both reactions occur simultaneously and in competition at the same active site. Although the small subunit is not catalytic it is essential for maximal activity. This Acetabularia peniculus (Green alga) protein is Ribulose bisphosphate carboxylase small subunit, chloroplastic 5.